Reading from the N-terminus, the 155-residue chain is Protein FAM162A (155 aa).

The interval 77 to 103 (RFKKEEEIPETISFEMLDAAKNKIRVK) is required for proapoptotic activity. A helical transmembrane segment spans residues 102–121 (VKVSYLMIALTVAGCVYMVI).

This sequence belongs to the UPF0389 family. Interacts with HSP90AB1; HSP90AB1 is essential for FAM162A mitochondrial localization and pro-apoptotic activity. Interacts with VDAC2; the interaction is probably involved in inducing mitochondrial permeability transition.

It localises to the mitochondrion membrane. Functionally, proposed to be involved in regulation of apoptosis; the exact mechanism may differ between cell types/tissues. May be involved in hypoxia-induced cell death of transformed cells implicating cytochrome C release and caspase activation (such as CASP9) and inducing mitochondrial permeability transition. May be involved in hypoxia-induced cell death of neuronal cells probably by promoting release of AIFM1 from mitochondria to cytoplasm and its translocation to the nucleus; however, the involvement of caspases has been reported conflictingly. The sequence is that of Protein FAM162A (Fam162a) from Rattus norvegicus (Rat).